We begin with the raw amino-acid sequence, 273 residues long: MAVRKFKPTTPGQRHKIIGTFEEITASVPEKSLVFGKRSTGGRNNVGKMTMRYMGGGHKRKYRLIDFKRNKDGVPAVVKTIEYDPNRSARIALLFYADGEKRYIIAPNGLQVGSTLVSGANAAPEIGNALPLENIPVGTVIHNIELRPGQGAALVRSAGNFAQLTSREGKYCVIKLPSGEVRQILSACKATIGSVGNSDHGLESSGKAGRTRWMGRRPRNRGVVMNPVDHPMGGGEGRASGGHPRSRTGLYAKGLKTRAPKKQSSKYIIERRK.

The tract at residues 196 to 273 is disordered; sequence GNSDHGLESS…SSKYIIERRK (78 aa). Basic residues-rich tracts occupy residues 209-220 and 255-264; these read GRTRWMGRRPRN and LKTRAPKKQS.

The protein belongs to the universal ribosomal protein uL2 family. Part of the 50S ribosomal subunit. Forms a bridge to the 30S subunit in the 70S ribosome.

Functionally, one of the primary rRNA binding proteins. Required for association of the 30S and 50S subunits to form the 70S ribosome, for tRNA binding and peptide bond formation. It has been suggested to have peptidyltransferase activity; this is somewhat controversial. Makes several contacts with the 16S rRNA in the 70S ribosome. The protein is Large ribosomal subunit protein uL2 of Phocaeicola vulgatus (strain ATCC 8482 / DSM 1447 / JCM 5826 / CCUG 4940 / NBRC 14291 / NCTC 11154) (Bacteroides vulgatus).